The sequence spans 890 residues: Translation initiation factor IF-2 (890 aa).

Residues 45–302 are disordered; that stretch reads LIDHLNQKNS…SSLQQGFQKP (258 aa). Residues 67–81 show a composition bias toward polar residues; that stretch reads STLNIPSTGGKSKSV. Residues 92-217 show a composition bias toward basic and acidic residues; sequence VKRDPQEAER…RMAEENKWTD (126 aa). The segment covering 252 to 266 has biased composition (basic residues); that stretch reads GRGRNAKAARPKKGN. Over residues 267 to 280 the composition is skewed to basic and acidic residues; sequence KHAESKADREEARA. The 170-residue stretch at 389–558 folds into the tr-type G domain; that stretch reads PRAPVVTIMG…LLQAEVLELK (170 aa). The tract at residues 398-405 is G1; the sequence is GHVDHGKT. 398–405 provides a ligand contact to GTP; it reads GHVDHGKT. The segment at 423–427 is G2; that stretch reads GITQH. The tract at residues 444-447 is G3; that stretch reads DTPG. Residues 444–448 and 498–501 each bind GTP; these read DTPGH and NKID. The tract at residues 498–501 is G4; it reads NKID. The G5 stretch occupies residues 534–536; it reads SAK. N6-acetyllysine is present on lysine 808.

This sequence belongs to the TRAFAC class translation factor GTPase superfamily. Classic translation factor GTPase family. IF-2 subfamily.

Its subcellular location is the cytoplasm. Functionally, one of the essential components for the initiation of protein synthesis. Protects formylmethionyl-tRNA from spontaneous hydrolysis and promotes its binding to the 30S ribosomal subunits. Also involved in the hydrolysis of GTP during the formation of the 70S ribosomal complex. The chain is Translation initiation factor IF-2 from Shigella dysenteriae serotype 1 (strain Sd197).